Here is a 57-residue protein sequence, read N- to C-terminus: Mambalgin-3 (57 aa).

4 disulfides stabilise this stretch: Cys3/Cys19, Cys12/Cys37, Cys41/Cys49, and Cys50/Cys55.

This sequence belongs to the three-finger toxin family. Short-chain subfamily. Mambalgin sub-subfamily. In terms of tissue distribution, expressed by the venom gland.

Its subcellular location is the secreted. Its function is as follows. This three-finger toxin inhibits ASIC channels. It acts as a gating modifier toxin by decreasing the apparent proton sensitivity of activation and by slightly increasing the apparent proton sensitivity for inactivation. It binds more tightly to the closed state and to a much lesser extent the inactivated/desensitized state of ASIC1a. It interacts directly with the outside surface of the thumb domain of chicken ASIC1a (ASIC1a), but does not insert into the acidic pocket as suggested previously. This binding leads to relocation of the thumb domain that could disrupt the acidic pocket of cASIC1a. The peptide exerts both stimulatory and inhibitory effects on ASIC1a. It reversibly inhibits rASIC1a (IC(50)=17 nM), rASIC1b (IC(50)= 44 nM) and rASIC1a-rASIC2a (IC(50)=252 nM) channels. In vivo, it shows a potent naloxone-resistant analgesic effect against acute and inflammatory pain upon central and peripheral injection. In addition, it also has an opioid-independent effect on both thermal and mechanical inflammatory pain after systemic administration and is effective against neuropathic pain. The protein is Mambalgin-3 of Dendroaspis angusticeps (Eastern green mamba).